A 135-amino-acid chain; its full sequence is Ribosome-binding factor A (135 aa).

The protein belongs to the RbfA family. Monomer. Binds 30S ribosomal subunits, but not 50S ribosomal subunits or 70S ribosomes.

The protein resides in the cytoplasm. One of several proteins that assist in the late maturation steps of the functional core of the 30S ribosomal subunit. Associates with free 30S ribosomal subunits (but not with 30S subunits that are part of 70S ribosomes or polysomes). Required for efficient processing of 16S rRNA. May interact with the 5'-terminal helix region of 16S rRNA. This chain is Ribosome-binding factor A, found in Methylobacterium nodulans (strain LMG 21967 / CNCM I-2342 / ORS 2060).